The chain runs to 148 residues: UPAR/Ly6 domain-containing protein bero (148 aa).

The signal sequence occupies residues 1 to 23 (MVSALKCSLAVAVMISLACSAYA). Cystine bridges form between Cys26/Cys72, Cys29/Cys37, Cys51/Cys90, Cys102/Cys116, and Cys119/Cys124. N-linked (GlcNAc...) asparagine glycosylation occurs at Asn68. Residue Asn125 is glycosylated (N-linked (GlcNAc...) asparagine). A lipid anchor (GPI-anchor amidated asparagine) is attached at Asn125. A propeptide spans 126–148 (GSSSLAPIAGAILLFFGVARLLA) (removed in mature form). Residues 128-148 (SSLAPIAGAILLFFGVARLLA) traverse the membrane as a helical segment.

This sequence belongs to the quiver family.

The protein resides in the cell membrane. The protein localises to the membrane. It is found in the perikaryon. Its subcellular location is the cell projection. It localises to the neuron projection. Its function is as follows. Necessary for the maintenance of persistent fluctuating activities and suppression of acute evoked activities in abdominal leucokinin-producing (ABLK) neurons to negatively regulate neuron excitability involved in nociceptive (perception of pain) behavioral responses. The protein is UPAR/Ly6 domain-containing protein bero of Drosophila melanogaster (Fruit fly).